Reading from the N-terminus, the 280-residue chain is 4-diphosphocytidyl-2-C-methyl-D-erythritol kinase (280 aa).

Residue Lys-8 is part of the active site. 91–101 (PVSAGLAGGST) provides a ligand contact to ATP. Residue Asp-133 is part of the active site.

It belongs to the GHMP kinase family. IspE subfamily.

The catalysed reaction is 4-CDP-2-C-methyl-D-erythritol + ATP = 4-CDP-2-C-methyl-D-erythritol 2-phosphate + ADP + H(+). The protein operates within isoprenoid biosynthesis; isopentenyl diphosphate biosynthesis via DXP pathway; isopentenyl diphosphate from 1-deoxy-D-xylulose 5-phosphate: step 3/6. In terms of biological role, catalyzes the phosphorylation of the position 2 hydroxy group of 4-diphosphocytidyl-2C-methyl-D-erythritol. The protein is 4-diphosphocytidyl-2-C-methyl-D-erythritol kinase of Clostridium botulinum (strain Eklund 17B / Type B).